The sequence spans 501 residues: L-arabinose isomerase (501 aa).

Mn(2+)-binding residues include glutamate 306, glutamate 333, histidine 350, and histidine 450.

This sequence belongs to the arabinose isomerase family. In terms of assembly, homohexamer. The cofactor is Mn(2+).

It catalyses the reaction beta-L-arabinopyranose = L-ribulose. It functions in the pathway carbohydrate degradation; L-arabinose degradation via L-ribulose; D-xylulose 5-phosphate from L-arabinose (bacterial route): step 1/3. Catalyzes the conversion of L-arabinose to L-ribulose. In Pectobacterium atrosepticum (strain SCRI 1043 / ATCC BAA-672) (Erwinia carotovora subsp. atroseptica), this protein is L-arabinose isomerase.